We begin with the raw amino-acid sequence, 190 residues long: Carbonic anhydrase 2 (190 aa).

This sequence belongs to the beta-class carbonic anhydrase family. Homohexamer.

It is found in the cytoplasm. The enzyme catalyses hydrogencarbonate + H(+) = CO2 + H2O. Its function is as follows. Reversible hydration of carbon dioxide. The polypeptide is Carbonic anhydrase 2 (Flaveria linearis (Narrowleaf yellowtops)).